A 629-amino-acid polypeptide reads, in one-letter code: Endoglucanase 15 (629 aa).

The signal sequence occupies residues 1–30 (MAKNGGAHGAATLFGLLALASMVKLGFVAG). Asp87 functions as the Nucleophile in the catalytic mechanism. Residues His421, Asp473, and Glu482 contribute to the active site. N-linked (GlcNAc...) asparagine glycans are attached at residues Asn520, Asn540, and Asn561.

It belongs to the glycosyl hydrolase 9 (cellulase E) family.

The protein localises to the secreted. The enzyme catalyses Endohydrolysis of (1-&gt;4)-beta-D-glucosidic linkages in cellulose, lichenin and cereal beta-D-glucans.. The protein is Endoglucanase 15 of Oryza sativa subsp. japonica (Rice).